The following is a 179-amino-acid chain: uncharacterized protein (179 aa).

The span at 26–39 shows a compositional bias: low complexity; that stretch reads AAKLAAATTPTHTA. The tract at residues 26–179 is disordered; sequence AAKLAAATTP…RPRRNTLRHM (154 aa). Positions 150–165 are enriched in polar residues; that stretch reads RQSVTQSTAARQTQPH. Positions 167 to 179 are enriched in basic residues; it reads GRPRPRRNTLRHM.

This is an uncharacterized protein from Equus caballus (Horse).